Consider the following 399-residue polypeptide: Argininosuccinate synthase (399 aa).

8 to 16 (AYSGGLDTS) contacts ATP. Tyr87 contacts L-citrulline. ATP is bound at residue Gly117. Positions 119, 123, and 124 each coordinate L-aspartate. Asn123 provides a ligand contact to L-citrulline. The L-citrulline site is built by Arg127, Ser175, Glu260, and Tyr272.

It belongs to the argininosuccinate synthase family. Type 1 subfamily. In terms of assembly, homotetramer.

Its subcellular location is the cytoplasm. The catalysed reaction is L-citrulline + L-aspartate + ATP = 2-(N(omega)-L-arginino)succinate + AMP + diphosphate + H(+). Its pathway is amino-acid biosynthesis; L-arginine biosynthesis; L-arginine from L-ornithine and carbamoyl phosphate: step 2/3. The chain is Argininosuccinate synthase from Rhodococcus erythropolis (strain PR4 / NBRC 100887).